A 610-amino-acid chain; its full sequence is ABC transporter ATP-binding protein/permease wht-3 (610 aa).

In terms of domain architecture, ABC transporter spans 42–277; the sequence is VKTRKKLFSK…FADCGHPIPK (236 aa). 74 to 81 contributes to the ATP binding site; sequence GASGAGKT. A run of 5 helical transmembrane segments spans residues 396-416, 446-466, 477-497, 503-523, and 584-604; these read ALYFLIAELTFSTMFGIMTFM, LPLFTIDGALMIVISYWMIGL, ILISVLVEQSATSCGLFLACL, LAIAFAVPASGLFALLSGLYG, and VIGLCSIVIFFYLAGYIALFI.

The protein belongs to the ABC transporter superfamily. ABCG family. Eye pigment precursor importer (TC 3.A.1.204) subfamily.

The protein resides in the membrane. Its function is as follows. Required for efficient RNA interference (RNAi) of pop-1 indicating a role in the germline development. This is ABC transporter ATP-binding protein/permease wht-3 (wht-3) from Caenorhabditis elegans.